Consider the following 239-residue polypeptide: MKISILTLFPEMFSIFDHSIIGRARENNIVDLETLNIRDYTLNKHKKVDDYPYGGGAGMVMAPQPIVDTIRDAKLSNKGKVVFLGPRGKTFNQEIAKELSKEEGLIFLCGHYEGIDERVYKHIDMEISLGDFVLTGGEMAAIPVIDCILRLIPGVLGKEESFMEESFYNGLLEYPQYTRPEEFEGDKVPEILLSGHHENIRKWRRLKSLEVTKKIRPDLYKKITLTKEDIKILKNKNNK.

S-adenosyl-L-methionine is bound by residues Gly110 and 129–134; that span reads LGDFVL.

The protein belongs to the RNA methyltransferase TrmD family. In terms of assembly, homodimer.

It localises to the cytoplasm. It catalyses the reaction guanosine(37) in tRNA + S-adenosyl-L-methionine = N(1)-methylguanosine(37) in tRNA + S-adenosyl-L-homocysteine + H(+). Functionally, specifically methylates guanosine-37 in various tRNAs. In Clostridium beijerinckii (strain ATCC 51743 / NCIMB 8052) (Clostridium acetobutylicum), this protein is tRNA (guanine-N(1)-)-methyltransferase.